Here is a 137-residue protein sequence, read N- to C-terminus: Large ribosomal subunit protein uL16 (137 aa).

Residues 1-21 (MLSPKKVKFRKRQKGRLKGKA) are compositionally biased toward basic residues. The disordered stretch occupies residues 1-22 (MLSPKKVKFRKRQKGRLKGKAQ).

Belongs to the universal ribosomal protein uL16 family. As to quaternary structure, part of the 50S ribosomal subunit.

In terms of biological role, binds 23S rRNA and is also seen to make contacts with the A and possibly P site tRNAs. This chain is Large ribosomal subunit protein uL16, found in Maridesulfovibrio salexigens (strain ATCC 14822 / DSM 2638 / NCIMB 8403 / VKM B-1763) (Desulfovibrio salexigens).